A 391-amino-acid chain; its full sequence is Shewanella-like protein phosphatase 2 (391 aa).

Positions 61, 63, 97, and 132 each coordinate Mn(2+). Histidine 133 serves as the catalytic Proton donor. Positions 232 and 295 each coordinate Mn(2+).

Belongs to the metallophosphoesterase superfamily. SLP family. Requires Mn(2+) as cofactor. Expressed in roots and siliques (at protein level).

It is found in the cytoplasm. Its subcellular location is the cytosol. Shows phosphatase activity, hydrolyzing the artificial substrate para-nitrophenylphosphate (pNPP) in vitro. This is Shewanella-like protein phosphatase 2 from Arabidopsis thaliana (Mouse-ear cress).